Reading from the N-terminus, the 1432-residue chain is Probable ATP-dependent RNA helicase spindle-E (1432 aa).

The Helicase ATP-binding domain maps to 125-292 (MKAIRENTVV…FATKNGIPPV (168 aa)). ATP is bound at residue 138–145 (GETGCGKT). A DEAH box motif is present at residues 238-241 (DEVH). One can recognise a Helicase C-terminal domain in the interval 342-525 (VIDNMERRTE…SSVLKAKELN (184 aa)). The region spanning 936–999 (AGSITKNLKL…RFMSNQLKRE (64 aa)) is the Tudor domain.

This sequence belongs to the DEAD box helicase family. DEAH subfamily.

The protein resides in the cytoplasm. It catalyses the reaction ATP + H2O = ADP + phosphate + H(+). In terms of biological role, probable ATP-binding RNA helicase which plays a central role during spermatogenesis and oogenesis by repressing transposable elements and preventing their mobilization, which is essential for the germline integrity. Acts via the piRNA metabolic process, which mediates the repression of transposable elements during meiosis by forming complexes composed of piRNAs and Piwi and govern the methylation and subsequent repression of transposons. Involved in the repression of LTR retrotransposon copia. Also involved in telomere regulation by repressing specialized telomeric retroelements HeT-A, TAHRE, and TART; Drosophila telomeres being maintained by transposition of specialized telomeric retroelements. Involved in telomeric trans-silencing, a repression mechanism by which a transposon or a transgene inserted in subtelomeric heterochromatin has the capacity to repress in trans in the female germline, a homologous transposon, or transgene located in euchromatin. Involved in the repression of testis-expressed Stellate genes by the homologous Su(Ste) repeats. Required for anteroposterior and dorsoventral axis formation during oogenesis. The polypeptide is Probable ATP-dependent RNA helicase spindle-E (spn-E) (Drosophila willistoni (Fruit fly)).